A 162-amino-acid chain; its full sequence is NADH-quinone oxidoreductase subunit I (162 aa).

2 4Fe-4S ferredoxin-type domains span residues R54–E83 and T93–I122. [4Fe-4S] cluster is bound by residues C63, C66, C69, C73, C102, C105, C108, and C112.

The protein belongs to the complex I 23 kDa subunit family. NDH-1 is composed of 14 different subunits. Subunits NuoA, H, J, K, L, M, N constitute the membrane sector of the complex. The cofactor is [4Fe-4S] cluster.

It localises to the cell inner membrane. It catalyses the reaction a quinone + NADH + 5 H(+)(in) = a quinol + NAD(+) + 4 H(+)(out). NDH-1 shuttles electrons from NADH, via FMN and iron-sulfur (Fe-S) centers, to quinones in the respiratory chain. The immediate electron acceptor for the enzyme in this species is believed to be ubiquinone. Couples the redox reaction to proton translocation (for every two electrons transferred, four hydrogen ions are translocated across the cytoplasmic membrane), and thus conserves the redox energy in a proton gradient. In Burkholderia thailandensis (strain ATCC 700388 / DSM 13276 / CCUG 48851 / CIP 106301 / E264), this protein is NADH-quinone oxidoreductase subunit I.